The following is a 274-amino-acid chain: Large ribosomal subunit protein uL2 (274 aa).

The tract at residues 221 to 274 (RGTAMNPVDHPHGGGEGKNFGKHPVTPWGVQTKGKKTRSNKRTDKFIVRRRSKK) is disordered.

It belongs to the universal ribosomal protein uL2 family. In terms of assembly, part of the 50S ribosomal subunit. Forms a bridge to the 30S subunit in the 70S ribosome.

Functionally, one of the primary rRNA binding proteins. Required for association of the 30S and 50S subunits to form the 70S ribosome, for tRNA binding and peptide bond formation. It has been suggested to have peptidyltransferase activity; this is somewhat controversial. Makes several contacts with the 16S rRNA in the 70S ribosome. In Serratia proteamaculans (strain 568), this protein is Large ribosomal subunit protein uL2.